A 647-amino-acid polypeptide reads, in one-letter code: DNA mismatch repair protein MutL (647 aa).

The disordered stretch occupies residues 389-423 (SESSVSSVANKQQPTVKQAKRSADDSDSEHGKLDY). A compositionally biased stretch (basic and acidic residues) spans 409 to 423 (RSADDSDSEHGKLDY).

It belongs to the DNA mismatch repair MutL/HexB family.

In terms of biological role, this protein is involved in the repair of mismatches in DNA. It is required for dam-dependent methyl-directed DNA mismatch repair. May act as a 'molecular matchmaker', a protein that promotes the formation of a stable complex between two or more DNA-binding proteins in an ATP-dependent manner without itself being part of a final effector complex. This chain is DNA mismatch repair protein MutL, found in Streptococcus thermophilus (strain ATCC BAA-491 / LMD-9).